The following is a 376-amino-acid chain: N-acetyldiaminopimelate deacetylase (376 aa).

The active site involves Asp69. Glu128 acts as the Proton acceptor in catalysis.

This sequence belongs to the peptidase M20A family. N-acetyldiaminopimelate deacetylase subfamily.

It catalyses the reaction N-acetyl-(2S,6S)-2,6-diaminopimelate + H2O = (2S,6S)-2,6-diaminopimelate + acetate. It participates in amino-acid biosynthesis; L-lysine biosynthesis via DAP pathway; LL-2,6-diaminopimelate from (S)-tetrahydrodipicolinate (acetylase route): step 3/3. Catalyzes the conversion of N-acetyl-diaminopimelate to diaminopimelate and acetate. The protein is N-acetyldiaminopimelate deacetylase of Streptococcus pneumoniae serotype 19F (strain G54).